Reading from the N-terminus, the 431-residue chain is MDAASTLTHAPVSQPWQSLAQGLGFVNEHEGYWWSKLGPPLGKMMNWARYSTSEQYRVLAFLYKYLLPACGPKPGDDGELFWKVFISYDYTPIQLSLNFHNGKMTLRTANIPISDKSGTADDPINQQASVDAIIRQERVLPSQDLRWFNHFASQYFFDKDTAASLKTKVDKLRVQQGVQCMLSHDFPERDVQCKVAFCPLWKAVATGLSNKEIIWDSILGLGDDIIPYKRALAVLEQYTSSENAAKAGVRPVFFAFDTVLKDNYKSSRIKIYYLTTRTAFNSMVDIYTLGGLLKGPDIQKGVEALEVLWKAVLNVPEGWPDDKDLPMNPHRCAAVIFNFELWPGAEFPSPKAYLPAHYYGRPDLEIADGMDYFFKQQGLDGVYGSYKENYLKCLSEVRTHRTNSQPSTMIFLFHSKGPMPTLRCTTSPSYL.

An L-tryptophan-binding site is contributed by 85–86 (FI). Residues arginine 107, lysine 194, arginine 268, lysine 270, tyrosine 272, and tyrosine 353 each contribute to the substrate site.

It belongs to the tryptophan dimethylallyltransferase family.

It participates in secondary metabolite biosynthesis. Functionally, indole diterpene prenyltransferase; part of the gene cluster that mediates the biosynthesis of the indole diterpenes nodulisporic acids (NA). Nodulisporic acid A (NAA) and its chemically modified derivatives are of particular significance because of their highly potent insecticidal activity against blood-feeding arthropods and lack of observable adverse effects on mammals, in particular the tremogenicity associated with the paspaline-derived IDTs is not observed. The geranylgeranyl diphosphate (GGPP) synthase ggs1, localized outside of the cluster, is proposed to catalyze the first step in nodulisporic acid biosynthesis via conversion of farnesyl pyrophosphate and isopentyl pyrophosphate into geranylgeranyl pyrophosphate (GGPP). Condensation of indole-3-glycerol phosphate with GGPP by the prenyl transferase nodC then forms 3-geranylgeranylindole (3-GGI). Epoxidation by the FAD-dependent monooxygenase nodM leads to a single-epoxidized-GGI that is substrate of the terpene cyclase nodB for cyclization to yield emindole SB. The terminal methyl carbon, C28, of emindole SB is then oxidized by the cytochrome P450 monooxygenase nodW to produce nodulisporic acid F (NAF), the pentacyclic core of NAA. NAF is converted to nodulisporic acid E (NAE) via prenylation. This step is probably performed by one of the indole diterpene prenyltransferases nodD1 or nodD2. Several oxidation steps performed by the FAD-linked oxidoreductase nodO and one of the cytochrome P450 monooxygenase nodR, nodX or nodZ further convert NAE to nodulisporic acid D (NAD). NAD is substrate of cytochrome P450 monooxygenase nodJ to produce the precursor of nodulisporic acid C (NAC), converted to NAC by one of the indole diterpene prenyltransferases nodD1 or nodD2. The FAD-dependent monooxygenase nodY2 then oxidizes NAC to nodulisporic acid B (NAB). Finally NAB is converted to NAA by one of the cytochrome P450 monooxygenases nodR, nodX or nodZ. The protein is Indole diterpene prenyltransferase nodD1 of Hypoxylon pulicicidum.